Reading from the N-terminus, the 293-residue chain is Small ribosomal subunit biogenesis GTPase RsgA (293 aa).

Positions K63–L223 constitute a CP-type G domain. Residues S112–D115 and G166–S174 each bind GTP. Positions 247, 252, 254, and 260 each coordinate Zn(2+).

The protein belongs to the TRAFAC class YlqF/YawG GTPase family. RsgA subfamily. As to quaternary structure, monomer. Associates with 30S ribosomal subunit, binds 16S rRNA. The cofactor is Zn(2+).

It localises to the cytoplasm. Its function is as follows. One of several proteins that assist in the late maturation steps of the functional core of the 30S ribosomal subunit. Helps release RbfA from mature subunits. May play a role in the assembly of ribosomal proteins into the subunit. Circularly permuted GTPase that catalyzes slow GTP hydrolysis, GTPase activity is stimulated by the 30S ribosomal subunit. The sequence is that of Small ribosomal subunit biogenesis GTPase RsgA from Bacillus cereus (strain ATCC 14579 / DSM 31 / CCUG 7414 / JCM 2152 / NBRC 15305 / NCIMB 9373 / NCTC 2599 / NRRL B-3711).